The sequence spans 389 residues: Serpin-Z3 (389 aa).

Residues 337-361 (GTEAAAVSVAIMMPQCLMRNPDFVA) are RCL.

This sequence belongs to the serpin family.

Its function is as follows. Probable serine protease inhibitor. The polypeptide is Serpin-Z3 (Arabidopsis thaliana (Mouse-ear cress)).